We begin with the raw amino-acid sequence, 314 residues long: Polyamine aminopropyltransferase (314 aa).

Positions 4 to 241 constitute a PABS domain; sequence GMYFFEHVTP…LNFGFLLASD (238 aa). Residue Gln-33 coordinates S-methyl-5'-thioadenosine. Spermidine is bound by residues His-64 and Glu-88. S-methyl-5'-thioadenosine-binding positions include Asp-108 and 140–141; that span reads DA. The active-site Proton acceptor is Asp-158. Pro-168 is a binding site for S-methyl-5'-thioadenosine.

The protein belongs to the spermidine/spermine synthase family. Homodimer or homotetramer.

Its subcellular location is the cytoplasm. It carries out the reaction S-adenosyl 3-(methylsulfanyl)propylamine + putrescine = S-methyl-5'-thioadenosine + spermidine + H(+). It functions in the pathway amine and polyamine biosynthesis; spermidine biosynthesis; spermidine from putrescine: step 1/1. Catalyzes the irreversible transfer of a propylamine group from the amino donor S-adenosylmethioninamine (decarboxy-AdoMet) to putrescine (1,4-diaminobutane) to yield spermidine. In Thermus thermophilus (strain ATCC BAA-163 / DSM 7039 / HB27), this protein is Polyamine aminopropyltransferase.